Consider the following 731-residue polypeptide: Actin filament-associated protein 1 (731 aa).

Position 1 is an N-acetylmethionine (Met1). Residues 46–90 (VKDHAQKAETNNLPAPPQMPLPEIPQPWLPPDSGPPPLPTSSLPE) are disordered. Residues 59–84 (PAPPQMPLPEIPQPWLPPDSGPPPLP) are compositionally biased toward pro residues. The SH3-binding signature appears at 70-73 (PQPW). The SH2-binding 1 motif lies at 93–96 (YEEA). Residues 118–138 (GSSYESYDEEEEDGKGKKTQH) are disordered. The 97-residue stretch at 152–248 (DAKICAFLLR…WLKVIKEAYS (97 aa)) folds into the PH 1 domain. A disordered region spans residues 252–318 (GPVDPECSPP…SKSEAKGTVS (67 aa)). A compositionally biased stretch (basic and acidic residues) spans 271–284 (AELEKKLSSERPSS). A phosphoserine mark is found at Ser283 and Ser284. The PH 2 domain occupies 348–442 (DVPTCGYLNV…WIGILLAETG (95 aa)). The SH2-binding 2 signature appears at 452–457 (YDYIDV). The disordered stretch occupies residues 511 to 550 (SLKNKKPPASSNGLPVKGRAPSSQQKKVESAGGVKRTASN). Ser549 is subject to Phosphoserine. A coiled-coil region spans residues 558 to 649 (KNRVEADAKR…VKESLKKALA (92 aa)). Positions 595–638 (DLRAAIEVNAGRKTQVALEDKLKRLEEECKQREAERVSLELELT) are interaction with F-actin. Residues 657-731 (AIEPKSGTSS…AREWELKNGT (75 aa)) are disordered. Residues Ser665, Ser666, and Ser669 each carry the phosphoserine modification. Thr676 bears the Phosphothreonine mark. The span at 678–687 (ENSPISSCDT) shows a compositional bias: polar residues. Residues Ser680 and Ser688 each carry the phosphoserine modification. Positions 721 to 731 (KAREWELKNGT) are enriched in basic and acidic residues.

In terms of assembly, monomer and homomultimer. Interacts via its C-terminus with F-actin; probably involving AFAP1 multimers. Interacts with activated SRC SH3-SH2 domains. Interacts via its PH 1 domain with PRKCA, PRKCB and PRKCI. Phosphorylated on tyrosine residues. Widely expressed with highest levels in brain.

It localises to the cytoplasm. It is found in the cytoskeleton. The protein resides in the stress fiber. Can cross-link actin filaments into both network and bundle structures. May modulate changes in actin filament integrity and induce lamellipodia formation. May function as an adapter molecule that links other proteins, such as SRC and PKC to the actin cytoskeleton. The chain is Actin filament-associated protein 1 (Afap1) from Rattus norvegicus (Rat).